The sequence spans 142 residues: Immunity protein WapI (142 aa).

In terms of biological role, immunity protein component of a toxin-immunity protein module, which functions as a cellular contact-dependent growth inhibition (CDI) system. Neutralizes the tRNase activity of cognate toxin WapA upon expression in E.coli. Does not inhibit WapA from other strains of B.subtilis. The WapA C-terminus cannot be expressed on its own in E.coli, however it can be cloned in the presence of its cognate immunity protein gene. Cell contact is necessary for growth inhibition. Unlike the LXG toxin-immunity modules, WapAI mediates competition under shaking culture conditions. This chain is Immunity protein WapI (wapI), found in Bacillus subtilis (strain 168).